The primary structure comprises 31 residues: Malate dehydrogenase, mitochondrial (31 aa).

Residues 9–19 (GIGQPLSLLMK) and 20–31 (DDLFNINAGIVK) each bind NAD(+).

The protein belongs to the LDH/MDH superfamily. MDH type 1 family. As to quaternary structure, homodimer.

The protein resides in the mitochondrion matrix. The catalysed reaction is (S)-malate + NAD(+) = oxaloacetate + NADH + H(+). This Imperata cylindrica (Cogon grass) protein is Malate dehydrogenase, mitochondrial.